The primary structure comprises 265 residues: Glutamate racemase (265 aa).

Residues 9–10 (DS) and 41–42 (YG) contribute to the substrate site. Cys-73 functions as the Proton donor/acceptor in the catalytic mechanism. Residue 74-75 (NT) coordinates substrate. The Proton donor/acceptor role is filled by Cys-180. 181-182 (TH) is a binding site for substrate.

Belongs to the aspartate/glutamate racemases family.

It catalyses the reaction L-glutamate = D-glutamate. The protein operates within cell wall biogenesis; peptidoglycan biosynthesis. In terms of biological role, provides the (R)-glutamate required for cell wall biosynthesis. The chain is Glutamate racemase from Aliivibrio salmonicida (strain LFI1238) (Vibrio salmonicida (strain LFI1238)).